The primary structure comprises 331 residues: Adenosine deaminase (331 aa).

Residues His-12 and His-14 each contribute to the Zn(2+) site. Substrate-binding residues include His-14, Asp-16, and Gly-170. His-197 is a Zn(2+) binding site. Glu-200 (proton donor) is an active-site residue. Position 278 (Asp-278) interacts with Zn(2+). Asp-279 lines the substrate pocket.

It belongs to the metallo-dependent hydrolases superfamily. Adenosine and AMP deaminases family. Adenosine deaminase subfamily. It depends on Zn(2+) as a cofactor.

It carries out the reaction adenosine + H2O + H(+) = inosine + NH4(+). It catalyses the reaction 2'-deoxyadenosine + H2O + H(+) = 2'-deoxyinosine + NH4(+). Its function is as follows. Catalyzes the hydrolytic deamination of adenosine and 2-deoxyadenosine. The polypeptide is Adenosine deaminase (Shewanella sp. (strain W3-18-1)).